We begin with the raw amino-acid sequence, 384 residues long: MELQEVLHMNEGEGDTSYAKNASYNLALAKVKPFLEQCIRELLRANLPNINKCIKVADLGCASGPNTLLTVRDIVQSIDKVGQEEKNELERPTIQIFLNDLFQNDFNSVFKLLPSFYRKLEKENGRKIGSCLISAMPGSFYGRLFPEESMHFLHSCYSVHWLSQVPSGLVIELGIGANKGSIYSSKASRPPVQKAYLDQFTKDFTTFLRIHSKELFSRGRMLLTCICKVDEYDEPNPLDLLDMAINDLIVEGHLEEEKLASFNLPFFTPSAEEVKCIVEEEGSFEILYLETFKAHYDAGFSIDDDYPVRSHFQVYGDEHIKAEYVASLIRSVYEPILASHFGEAIMPDLFHRLAKHAAKVLHLGKGCYNNLIISLAKKPEKSDV.

S-adenosyl-L-homocysteine contacts are provided by Tyr18, Cys61, Asn66, Asp100, Leu101, Ser139, Phe140, and Cys156. Positions 157, 160, and 161 each coordinate theobromine. Residues Asn178, Phe262, and Asn263 each coordinate Mg(2+). Tyr368 lines the theobromine pocket.

Belongs to the methyltransferase superfamily. Type-7 methyltransferase family. It depends on Mg(2+) as a cofactor. As to expression, expressed, at low levels, in young leaves, floral buds and immature fruits (grains), but not in old leaves and mature fruits. Highly expressed in developing endosperm and flower buds. Detected in young leaves.

It catalyses the reaction 7-methylxanthine + S-adenosyl-L-methionine = theobromine + S-adenosyl-L-homocysteine + H(+). Its pathway is alkaloid biosynthesis. In terms of biological role, involved in the biosynthesis of caffeine. Catalyzes the conversion of 7-methylxanthine (7mX) to theobromine and with a lower activity of paraxanthine to caffeine. Does not have 1-N-methylation activity. This chain is Monomethylxanthine methyltransferase 2, found in Coffea arabica (Arabian coffee).